The following is a 267-amino-acid chain: GTP cyclohydrolase FolE2 (267 aa).

Belongs to the GTP cyclohydrolase IV family.

It carries out the reaction GTP + H2O = 7,8-dihydroneopterin 3'-triphosphate + formate + H(+). The protein operates within cofactor biosynthesis; 7,8-dihydroneopterin triphosphate biosynthesis; 7,8-dihydroneopterin triphosphate from GTP: step 1/1. Functionally, converts GTP to 7,8-dihydroneopterin triphosphate. This Geobacter sp. (strain M21) protein is GTP cyclohydrolase FolE2.